Here is a 39-residue protein sequence, read N- to C-terminus: Potassium channel toxin alpha-KTx 2.2 (39 aa).

3 disulfides stabilise this stretch: C7–C29, C13–C34, and C17–C36. Positions 37–39 (YPH) are interaction with Kv1.3 channels.

The protein belongs to the short scorpion toxin superfamily. Potassium channel inhibitor family. Alpha-KTx 02 subfamily. Expressed by the venom gland.

The protein localises to the secreted. In terms of biological role, potent inhibitor of voltage-gated potassium channels such as Kv1.1/KCNA1 (IC(50)=0.144 nM), Kv1.2/KCNA2 (IC(50)=0.675 nM), Kv1.3/KCNA3 (IC(50)=0.23 nM) and Shaker (Kd=160 nM). Suppresses expression of the Kv1.3/KCNA3 channel in lipopolysaccharide (LPS)-stimulated mouse macrophages. Down-regulates secretion of nitric oxide (NO) and inflammatory cytokines, such as TNF-alpha/TNF, IL-1beta/IL1B and IL6, in LPS-stimulated mouse macrophages in a manner dependent on Kv1.3/KCNA3 channel blockage. Reduces activation of MAPK and NF-kappa-B signaling pathways in LPS-stimulated mouse macrophages. Modulates intracellular Ca(2+) signaling in human PMA/ionomycin-triggered T-cells. Interferes with the activation of the MAPK, NF-kappa-B and NFATc1 pathways in human PMA/ionomycin-triggered T-cells. Reduces proliferation of human PMA/ionomycin-triggered T-cells. Down-regulates secretion of cytokines, such as TNF-alpha/TNF and IL2, in human PMA/ionomycin-triggered T-cells. This is Potassium channel toxin alpha-KTx 2.2 from Centruroides margaritatus (Central American bark Scorpion).